The primary structure comprises 579 residues: MRNAQKPSGMPVHRYMPFQDQITVELPDRTWPDKVITKAPRWCAVDLRDGNQALIDPMSPARKMKMFDLLVRMGYKEIEVGFPSASQTDFDFVRQLIEGNHIPDDVTIQVLTQAREHLIERTYESLVGAKQAIVHLYNSTSVLQRRVVFNQDEDGILDIALQGARLCKKYEETLADTHITYEYSPESFTGTELEYAVRVCNAVADVFEASADSQVIINLPATVEMATPNVYADSIEWMSRHLHPREGIILSLHPHNDRGTGVAAAELGYLAGADRIEGCLFGNGERTGNVDLVTLGLNMFVQGIDPMIDFSDIDDVRRTVEYCNQLPVAERSPYGGDLVFTAFSGSHQDAIKKGFEALEKDAAAAGKDVADYTWQVPYLPVDPKDLGRSYEAVIRVNSQSGKGGVAYLLKNEHSLDLPRRAQIEFSGVIQKRTDTVGGEVSGAQLWQIFQDEYLPSSKEDGQWGRYSLGSFSTETDDDGAMTLHATVTVDGVQVRRTGSGNGPIAALLSILGQDGVDVRVLDYSEHALSEGGNARAAAYVECAVGERVLWGVGIDSNTTTSSLKAVISAVNRAIRDAQA.

One can recognise a Pyruvate carboxyltransferase domain in the interval proline 40 to aspartate 314. Mg(2+) contacts are provided by aspartate 49, histidine 253, histidine 255, and asparagine 289. The interval serine 456–alanine 579 is regulatory domain.

It belongs to the alpha-IPM synthase/homocitrate synthase family. LeuA type 2 subfamily. As to quaternary structure, homodimer. Requires Mg(2+) as cofactor.

Its subcellular location is the cytoplasm. It carries out the reaction 3-methyl-2-oxobutanoate + acetyl-CoA + H2O = (2S)-2-isopropylmalate + CoA + H(+). Its pathway is amino-acid biosynthesis; L-leucine biosynthesis; L-leucine from 3-methyl-2-oxobutanoate: step 1/4. Catalyzes the condensation of the acetyl group of acetyl-CoA with 3-methyl-2-oxobutanoate (2-ketoisovalerate) to form 3-carboxy-3-hydroxy-4-methylpentanoate (2-isopropylmalate). This Arthrobacter sp. (strain FB24) protein is 2-isopropylmalate synthase.